Consider the following 157-residue polypeptide: SsrA-binding protein (157 aa).

The segment at 133 to 157 (HDKRNSIKEREGKREVERALKSRSR) is disordered.

Belongs to the SmpB family.

It localises to the cytoplasm. Functionally, required for rescue of stalled ribosomes mediated by trans-translation. Binds to transfer-messenger RNA (tmRNA), required for stable association of tmRNA with ribosomes. tmRNA and SmpB together mimic tRNA shape, replacing the anticodon stem-loop with SmpB. tmRNA is encoded by the ssrA gene; the 2 termini fold to resemble tRNA(Ala) and it encodes a 'tag peptide', a short internal open reading frame. During trans-translation Ala-aminoacylated tmRNA acts like a tRNA, entering the A-site of stalled ribosomes, displacing the stalled mRNA. The ribosome then switches to translate the ORF on the tmRNA; the nascent peptide is terminated with the 'tag peptide' encoded by the tmRNA and targeted for degradation. The ribosome is freed to recommence translation, which seems to be the essential function of trans-translation. This is SsrA-binding protein from Verminephrobacter eiseniae (strain EF01-2).